The primary structure comprises 271 residues: Shikimate dehydrogenase (NADP(+)) (271 aa).

Residues 19–21 (SLS) and T65 each bind shikimate. Catalysis depends on K69, which acts as the Proton acceptor. E81 serves as a coordination point for NADP(+). The shikimate site is built by N90 and D105. NADP(+) is bound by residues 128–132 (GAGGA), 150–155 (NRTIEK), and I211. Y213 is a shikimate binding site. G234 lines the NADP(+) pocket.

The protein belongs to the shikimate dehydrogenase family. Homodimer.

The catalysed reaction is shikimate + NADP(+) = 3-dehydroshikimate + NADPH + H(+). It participates in metabolic intermediate biosynthesis; chorismate biosynthesis; chorismate from D-erythrose 4-phosphate and phosphoenolpyruvate: step 4/7. Involved in the biosynthesis of the chorismate, which leads to the biosynthesis of aromatic amino acids. Catalyzes the reversible NADPH linked reduction of 3-dehydroshikimate (DHSA) to yield shikimate (SA). The chain is Shikimate dehydrogenase (NADP(+)) from Pyrococcus furiosus (strain ATCC 43587 / DSM 3638 / JCM 8422 / Vc1).